Here is a 348-residue protein sequence, read N- to C-terminus: Carbamoyl phosphate synthase small chain (348 aa).

The interval 1–167 (MKRYLITSDG…VKNIRGKGER (167 aa)) is CPSase. Residues serine 45, glycine 213, and glycine 215 each coordinate L-glutamine. A Glutamine amidotransferase type-1 domain is found at 168 to 348 (RILFIDLGSK…RRRTEDAAKG (181 aa)). The active-site Nucleophile is the cysteine 242. Residues phenylalanine 243, glutamine 246, asparagine 282, glycine 284, and tyrosine 285 each contribute to the L-glutamine site. Residues histidine 321 and glutamate 323 contribute to the active site.

It belongs to the CarA family. In terms of assembly, composed of two chains; the small (or glutamine) chain promotes the hydrolysis of glutamine to ammonia, which is used by the large (or ammonia) chain to synthesize carbamoyl phosphate. Tetramer of heterodimers (alpha,beta)4.

The enzyme catalyses hydrogencarbonate + L-glutamine + 2 ATP + H2O = carbamoyl phosphate + L-glutamate + 2 ADP + phosphate + 2 H(+). It carries out the reaction L-glutamine + H2O = L-glutamate + NH4(+). It functions in the pathway amino-acid biosynthesis; L-arginine biosynthesis; carbamoyl phosphate from bicarbonate: step 1/1. The protein operates within pyrimidine metabolism; UMP biosynthesis via de novo pathway; (S)-dihydroorotate from bicarbonate: step 1/3. In terms of biological role, small subunit of the glutamine-dependent carbamoyl phosphate synthetase (CPSase). CPSase catalyzes the formation of carbamoyl phosphate from the ammonia moiety of glutamine, carbonate, and phosphate donated by ATP, constituting the first step of 2 biosynthetic pathways, one leading to arginine and/or urea and the other to pyrimidine nucleotides. The small subunit (glutamine amidotransferase) binds and cleaves glutamine to supply the large subunit with the substrate ammonia. In Thermoplasma acidophilum (strain ATCC 25905 / DSM 1728 / JCM 9062 / NBRC 15155 / AMRC-C165), this protein is Carbamoyl phosphate synthase small chain.